Consider the following 317-residue polypeptide: Beta-ketoacyl-[acyl-carrier-protein] synthase III (317 aa).

Residues C112 and H244 contribute to the active site. The interval 245 to 249 is ACP-binding; that stretch reads QANLR. N274 is a catalytic residue.

It belongs to the thiolase-like superfamily. FabH family. As to quaternary structure, homodimer.

Its subcellular location is the cytoplasm. It carries out the reaction malonyl-[ACP] + acetyl-CoA + H(+) = 3-oxobutanoyl-[ACP] + CO2 + CoA. It participates in lipid metabolism; fatty acid biosynthesis. Catalyzes the condensation reaction of fatty acid synthesis by the addition to an acyl acceptor of two carbons from malonyl-ACP. Catalyzes the first condensation reaction which initiates fatty acid synthesis and may therefore play a role in governing the total rate of fatty acid production. Possesses both acetoacetyl-ACP synthase and acetyl transacylase activities. Its substrate specificity determines the biosynthesis of branched-chain and/or straight-chain of fatty acids. This chain is Beta-ketoacyl-[acyl-carrier-protein] synthase III, found in Enterobacter sp. (strain 638).